The chain runs to 28 residues: U15-ctenitoxin-Co1a (28 aa).

2 cysteine pairs are disulfide-bonded: cysteine 3–cysteine 17 and cysteine 10–cysteine 22.

Expressed by the venom gland.

It is found in the secreted. Insecticidal neurotoxin that reversibly inhibits the N-methyl-D-aspartate (NMDA)-subtype of ionotropic glutamate receptor (GRIN) and inhibits inactivation of insect sodium channels (Nav). In vivo, is highly toxic to insects. This is U15-ctenitoxin-Co1a from Ctenus ornatus (Brazilian spider).